The following is a 139-amino-acid chain: Gonadotropin subunit beta-2 (139 aa).

Residues 1 to 24 (MFPLVLSLFLGATSDIWPLAPAEA) form the signal peptide. 6 cysteine pairs are disulfide-bonded: cysteine 30–cysteine 78, cysteine 44–cysteine 93, cysteine 47–cysteine 131, cysteine 55–cysteine 109, cysteine 59–cysteine 111, and cysteine 114–cysteine 121. Asparagine 34 carries an N-linked (GlcNAc...) asparagine glycan.

This sequence belongs to the glycoprotein hormones subunit beta family. Heterodimer of an alpha and a beta chain.

It is found in the secreted. Involved in gametogenesis and steroidogenesis. This chain is Gonadotropin subunit beta-2 (cgbb), found in Morone saxatilis (Striped bass).